Consider the following 203-residue polypeptide: CCG-binding protein 1 (203 aa).

Residues 156 to 178 (IPDGLPKSEQELEEEEKSKMPDS) are disordered. The segment covering 161-175 (PKSEQELEEEEKSKM) has biased composition (basic and acidic residues).

In terms of assembly, homotetramer. Interacts with MEE12/CCG, MED7A, MED7B, MED9, AGL49, AGL53, AGL75, AGL80, AGL81, AGL82, AGL103 and NRPB1 (via CTD). Expressed in roots, leaves, stems and flowers. Expressed in the central cell of mature ovules.

The protein resides in the nucleus. Its subcellular location is the cytoplasm. In terms of biological role, required for the development of the one-cell zygote and endosperm in embryos. Required for micropylar pollen tube guidance, but has no effect on ovule development and gametophytic cell fate specification. May connect transcription factors and the Pol II machinery to regulate pollen tube attraction, via its interactions with AGAMOUS-like (AGL) transcription factors, MEE14/CCG and the Mediator complex. The protein is CCG-binding protein 1 of Arabidopsis thaliana (Mouse-ear cress).